The chain runs to 155 residues: SsrA-binding protein (155 aa).

This sequence belongs to the SmpB family.

The protein resides in the cytoplasm. In terms of biological role, required for rescue of stalled ribosomes mediated by trans-translation. Binds to transfer-messenger RNA (tmRNA), required for stable association of tmRNA with ribosomes. tmRNA and SmpB together mimic tRNA shape, replacing the anticodon stem-loop with SmpB. tmRNA is encoded by the ssrA gene; the 2 termini fold to resemble tRNA(Ala) and it encodes a 'tag peptide', a short internal open reading frame. During trans-translation Ala-aminoacylated tmRNA acts like a tRNA, entering the A-site of stalled ribosomes, displacing the stalled mRNA. The ribosome then switches to translate the ORF on the tmRNA; the nascent peptide is terminated with the 'tag peptide' encoded by the tmRNA and targeted for degradation. The ribosome is freed to recommence translation, which seems to be the essential function of trans-translation. The polypeptide is SsrA-binding protein (Moorella thermoacetica (strain ATCC 39073 / JCM 9320)).